Here is a 119-residue protein sequence, read N- to C-terminus: Large ribosomal subunit protein bL20 (119 aa).

Belongs to the bacterial ribosomal protein bL20 family.

Functionally, binds directly to 23S ribosomal RNA and is necessary for the in vitro assembly process of the 50S ribosomal subunit. It is not involved in the protein synthesizing functions of that subunit. The sequence is that of Large ribosomal subunit protein bL20 from Metamycoplasma arthritidis (strain 158L3-1) (Mycoplasma arthritidis).